The following is a 164-amino-acid chain: MALKSKFLVGSILATFILNGFSSPAQALELDEDTRTVTLDGKGNTVVLSVEQIKRGKRLFNNACAICHVGGLTKTNPNVGLDVEALSLATPPRDNVSSLVSYLKDPMTYDGADSIAELHPSIKSADIFPKMRSLTDEDLFAISGHILVQPKVVNEKWGGGKIYY.

The first 27 residues, Met-1–Ala-27, serve as a signal peptide directing secretion. Positions 64, 67, 68, and 119 each coordinate heme c.

The protein belongs to the cytochrome c family. PsbV subfamily. In terms of assembly, PSII is composed of 1 copy each of membrane proteins PsbA, PsbB, PsbC, PsbD, PsbE, PsbF, PsbH, PsbI, PsbJ, PsbK, PsbL, PsbM, PsbT, PsbY, PsbZ, Psb30/Ycf12, at least 3 peripheral proteins of the oxygen-evolving complex and a large number of cofactors. It forms dimeric complexes. Heme c is required as a cofactor.

The protein resides in the plastid. The protein localises to the chloroplast thylakoid membrane. In terms of biological role, one of the extrinsic, lumenal subunits of photosystem II (PSII). PSII is a light-driven water plastoquinone oxidoreductase, using light energy to abstract electrons from H(2)O, generating a proton gradient subsequently used for ATP formation. The extrinsic proteins stabilize the structure of photosystem II oxygen-evolving complex (OEC), the ion environment of oxygen evolution and protect the OEC against heat-induced inactivation. The sequence is that of Photosystem II extrinsic protein V from Emiliania huxleyi (Coccolithophore).